A 364-amino-acid chain; its full sequence is DNA replication and repair protein RecF (364 aa).

30-37 contacts ATP; it reads GANGSGKT.

It belongs to the RecF family.

The protein resides in the cytoplasm. The RecF protein is involved in DNA metabolism; it is required for DNA replication and normal SOS inducibility. RecF binds preferentially to single-stranded, linear DNA. It also seems to bind ATP. In Sodalis glossinidius (strain morsitans), this protein is DNA replication and repair protein RecF.